Consider the following 325-residue polypeptide: NADH-quinone oxidoreductase subunit H (325 aa).

9 consecutive transmembrane segments (helical) span residues 11-31 (ILLS…CGAF), 50-69 (NRVG…KMFF), 81-101 (VIFT…FAIV), 114-134 (IGIL…LFAG), 154-174 (LSYE…AGSF), 186-206 (IWNV…GVAV), 237-257 (FFVG…TLFF), 265-285 (LPPF…FILI), and 304-324 (VCLP…LWQA).

Belongs to the complex I subunit 1 family. As to quaternary structure, NDH-1 is composed of 13 different subunits. Subunits NuoA, H, J, K, L, M, N constitute the membrane sector of the complex.

It localises to the cell inner membrane. It catalyses the reaction a quinone + NADH + 5 H(+)(in) = a quinol + NAD(+) + 4 H(+)(out). Functionally, NDH-1 shuttles electrons from NADH, via FMN and iron-sulfur (Fe-S) centers, to quinones in the respiratory chain. The immediate electron acceptor for the enzyme in this species is believed to be ubiquinone. Couples the redox reaction to proton translocation (for every two electrons transferred, four hydrogen ions are translocated across the cytoplasmic membrane), and thus conserves the redox energy in a proton gradient. This subunit may bind ubiquinone. The sequence is that of NADH-quinone oxidoreductase subunit H from Citrobacter koseri (strain ATCC BAA-895 / CDC 4225-83 / SGSC4696).